Here is a 210-residue protein sequence, read N- to C-terminus: Putative cutinase (210 aa).

Residues 26-38 (DSERLPLKRDEPG) are compositionally biased toward basic and acidic residues. Residues 26 to 58 (DSERLPLKRDEPGSRSMRSTFIPSSQCSNLSSA) are disordered. Over residues 49–58 (SSQCSNLSSA) the composition is skewed to low complexity.

It catalyses the reaction cutin + H2O = cutin monomers.. This is Putative cutinase from Phytophthora capsici.